The following is a 249-amino-acid chain: Methyl-coenzyme M reductase I subunit gamma (249 aa).

A coenzyme M-binding site is contributed by arginine 120.

Belongs to the methyl-coenzyme M reductase gamma subunit family. MCR is a hexamer of two alpha, two beta, and two gamma chains, forming a dimer of heterotrimers. The cofactor is coenzyme F430.

It is found in the cytoplasm. It catalyses the reaction coenzyme B + methyl-coenzyme M = methane + coenzyme M-coenzyme B heterodisulfide. The protein operates within one-carbon metabolism; methyl-coenzyme M reduction; methane from methyl-coenzyme M: step 1/1. Methyl-coenzyme M reductase activity is inhibited by 3-nitrooxypropanol (3-NOP) in vitro and in vivo, by oxidation of its active site Ni(I), which stops both growth and methanogenesis. Is also inhibited by the reaction product CoM-S-S-CoB. Component of the methyl-coenzyme M reductase (MCR) I that catalyzes the reductive cleavage of methyl-coenzyme M (CoM-S-CH3 or 2-(methylthio)ethanesulfonate) using coenzyme B (CoB or 7-mercaptoheptanoylthreonine phosphate) as reductant which results in the production of methane and the mixed heterodisulfide of CoB and CoM (CoM-S-S-CoB). This is the final step in methanogenesis. Neither N-6-mercaptohexanoylthreonine phosphate (H-S-HxoTP) nor N-8-mercaptooctanoylthreonine phosphate (H-SOcoTP) nor any other thiol compound such as CoA or CoM can substitute for CoB as the electron donor. This Methanothermobacter marburgensis (strain ATCC BAA-927 / DSM 2133 / JCM 14651 / NBRC 100331 / OCM 82 / Marburg) (Methanobacterium thermoautotrophicum) protein is Methyl-coenzyme M reductase I subunit gamma (mcrG).